Reading from the N-terminus, the 180-residue chain is Oligoribonuclease (180 aa).

Residues L7 to L170 form the Exonuclease domain. Y128 is a catalytic residue.

It belongs to the oligoribonuclease family.

The protein localises to the cytoplasm. Its function is as follows. 3'-to-5' exoribonuclease specific for small oligoribonucleotides. This Ruthia magnifica subsp. Calyptogena magnifica protein is Oligoribonuclease.